A 633-amino-acid polypeptide reads, in one-letter code: Chaperone protein HtpG (633 aa).

The tract at residues 1-341 (MTAPHETMSF…SADLPLNVSR (341 aa)) is a; substrate-binding. Residues 342-562 (ELLQESRDVK…EGDMSGYLQR (221 aa)) are b. A c region spans residues 563–633 (LLKQAGQKAP…YVQRVNKLLA (71 aa)).

Belongs to the heat shock protein 90 family. Homodimer.

The protein resides in the cytoplasm. Its function is as follows. Molecular chaperone. Has ATPase activity. The protein is Chaperone protein HtpG of Cupriavidus necator (strain ATCC 17699 / DSM 428 / KCTC 22496 / NCIMB 10442 / H16 / Stanier 337) (Ralstonia eutropha).